Reading from the N-terminus, the 1410-residue chain is SNF2 domain-containing protein CLASSY 3 (1410 aa).

Over residues 1-12 the composition is skewed to basic residues; it reads MECIGKRVKSRS. 6 disordered regions span residues 1 to 74, 87 to 108, 209 to 330, 344 to 376, 428 to 593, and 632 to 654; these read MECI…SVPN, DLNVEKKSGPSSSRLTDGSEQN, GEIE…PIKR, RSGSSLTKPRERDNKIQKLNHREEEKKERQREV, NVSK…LKDK, and EDEADELVSSAEDQSQEQAREDH. A Nuclear localization signal 1 motif is present at residues 22 to 29; the sequence is RKKMETVA. Polar residues predominate over residues 95-108; sequence GPSSSRLTDGSEQN. Residues 245 to 266 are compositionally biased toward acidic residues; sequence SDGEDSSSETDEEEEENQDSED. Positions 248 to 278 form a coiled coil; it reads EDSSSETDEEEEENQDSEDNNTKDNVTVESL. The segment covering 276 to 301 has biased composition (low complexity); that stretch reads ESLSSEDPSSSSSSSSSSSSSSSSSS. The segment covering 306–323 has biased composition (basic and acidic residues); the sequence is SYVKEVVGDNRDDDDLRK. The short motif at 328-335 is the Nuclear localization signal 2 element; it reads IKRVSLVE. Residues 351–376 show a composition bias toward basic and acidic residues; sequence KPRERDNKIQKLNHREEEKKERQREV. Residues 356–377 adopt a coiled-coil conformation; sequence DNKIQKLNHREEEKKERQREVV. Residues 428–446 are compositionally biased toward polar residues; sequence NVSKYEDSVSINSGKTTGA. Basic and acidic residues-rich tracts occupy residues 450 to 463 and 488 to 504; these read PEVENPETGKELNT and EPSRPEIYSSEKAKEVQ. The segment covering 576-587 has biased composition (low complexity); the sequence is SSISSGDGYESD. The Helicase ATP-binding domain maps to 850 to 1060; it reads FENSDETGGC…CNVLGLARPK (211 aa). Residue 863–870 participates in ATP binding; it reads HAPGTGKT. Positions 1011–1014 match the DEAH box motif; it reads DEAH. The Nuclear localization signal 3 motif lies at 1132-1139; the sequence is QRRVLESI. Residues 1206-1359 enclose the Helicase C-terminal domain; that stretch reads EFVELCEVIK…ELVFACSSRH (154 aa).

This sequence belongs to the SNF2/RAD54 helicase family. Interacts with NRPD1.

The protein resides in the nucleus. Probable chromatin remodeling factor. The polypeptide is SNF2 domain-containing protein CLASSY 3 (CLSY3) (Arabidopsis thaliana (Mouse-ear cress)).